Consider the following 71-residue polypeptide: Translational regulator CsrA (71 aa).

It belongs to the CsrA/RsmA family. As to quaternary structure, homodimer; the beta-strands of each monomer intercalate to form a hydrophobic core, while the alpha-helices form wings that extend away from the core.

It localises to the cytoplasm. In terms of biological role, a key translational regulator that binds mRNA to regulate translation initiation and/or mRNA stability. Mediates global changes in gene expression, shifting from rapid growth to stress survival by linking envelope stress, the stringent response and the catabolite repression systems. Usually binds in the 5'-UTR; binding at or near the Shine-Dalgarno sequence prevents ribosome-binding, repressing translation, binding elsewhere in the 5'-UTR can activate translation and/or stabilize the mRNA. Its function is antagonized by small RNA(s). The sequence is that of Translational regulator CsrA from Pseudoalteromonas atlantica (strain T6c / ATCC BAA-1087).